A 1912-amino-acid polypeptide reads, in one-letter code: Protein javelin (1912 aa).

Disordered regions lie at residues 1 to 32, 89 to 145, 298 to 377, 460 to 515, 545 to 586, 764 to 920, 965 to 1010, 1257 to 1297, 1486 to 1507, and 1881 to 1912; these read MGNGYFRTSQTSSSSRQREKRGKDSYSYQHNY, GTGL…VGGA, RSRH…HRLS, QSRR…SLSE, TTRT…TLRQ, SYNQ…EAPV, IQEN…GKPL, GINS…GGAA, EQQENGEHLEEEDDEQDDQYED, and YDPSKEPPPQVEEGTDKIPTDAELYDSLDDKM. Basic residues-rich tracts occupy residues 97 to 133 and 299 to 313; these read QQLHHHHSNQVNQHHHQQQQSHHHLQHANLHSHHPHA and SRHKFQFKQFKKKPP. The span at 339 to 354 shows a compositional bias: polar residues; sequence ADDTQSQRSNSATCDS. Residues 355 to 374 are compositionally biased toward low complexity; sequence HQQQQQQQHQPQQQHQQQQH. Positions 489–498 are enriched in polar residues; the sequence is EHSQSSVFPE. The span at 499–512 shows a compositional bias: low complexity; sequence TTTSNSDDQTDSPS. The span at 553–566 shows a compositional bias: acidic residues; the sequence is SEEGEEEQTGEEVV. Residues 568-586 are compositionally biased toward polar residues; sequence SLTTPTEPQTSDSESTLRQ. 2 stretches are compositionally biased toward basic and acidic residues: residues 772 to 792 and 802 to 869; these read QRKEAKKEQQVTRAETYDSIR and RQRE…RKEE. Residues 890–904 are compositionally biased toward acidic residues; the sequence is SQQEDTVADVEEEDN. The span at 965 to 979 shows a compositional bias: basic and acidic residues; that stretch reads IQENKETSQRIEPKP. Positions 981–990 are enriched in low complexity; that stretch reads PKTNSNSSST. Acidic residues-rich tracts occupy residues 1494-1507 and 1903-1912; these read LEEEDDEQDDQYED and ELYDSLDDKM.

The protein localises to the cytoplasm. Its subcellular location is the cytoskeleton. In terms of biological role, important for normal assembly of actin bundles during bristle formation. The sequence is that of Protein javelin from Drosophila melanogaster (Fruit fly).